We begin with the raw amino-acid sequence, 192 residues long: LOB domain-containing protein 32 (192 aa).

In terms of domain architecture, LOB spans Asn4–Leu105.

This sequence belongs to the LOB domain-containing protein family.

This is LOB domain-containing protein 32 (LBD32) from Arabidopsis thaliana (Mouse-ear cress).